Reading from the N-terminus, the 274-residue chain is Transmembrane O-methyltransferase (274 aa).

The helical transmembrane segment at 14–34 threads the bilayer; it reads VGTMSPAIALAFLPLVVTLLV. Residues E120, 122-123, S128, E146, and S176 contribute to the S-adenosyl-L-methionine site; that span reads GT.

It belongs to the class I-like SAM-binding methyltransferase superfamily. Cation-dependent O-methyltransferase family. In terms of assembly, interacts with LHFPL5, PCDH15, TMC1, TMC2 and TMIE. Interacts directly with TMC1. The interaction of TOMT with TMC1 and TMC2 is required for the transportation of TMC1/2 into the stereocilia of hair cells.

Its subcellular location is the membrane. The protein localises to the cytoplasm. The protein resides in the endoplasmic reticulum. It carries out the reaction a catechol + S-adenosyl-L-methionine = a guaiacol + S-adenosyl-L-homocysteine + H(+). In terms of biological role, catalyzes the O-methylation, and thereby the inactivation, of catecholamine neurotransmitters and catechol hormones. Required for auditory function. Component of the cochlear hair cell's mechanotransduction (MET) machinery. Involved in the assembly of the asymmetric tip-link MET complex. Required for transportation of TMC1 and TMC2 proteins into the mechanically sensitive stereocilia of the hair cells. The function in MET is independent of the enzymatic activity. The protein is Transmembrane O-methyltransferase of Propithecus coquereli (Coquerel's sifaka).